Consider the following 895-residue polypeptide: Iron-regulated surface determinant protein H (895 aa).

Residues 1 to 40 (MNKHHPKLRSFYSIRKSTLGVASVIVSTLFLITSQHQAQA) form the signal peptide. Residues 42–85 (ENTNTSDKISENQNNNATTTQPPKDTNQTQPATQPANTAKNYPA) form a disordered region. Low complexity predominate over residues 53–62 (NQNNNATTTQ). The span at 63-81 (PPKDTNQTQPATQPANTAK) shows a compositional bias: polar residues. The 128-residue stretch at 105 to 232 (DIGPREQVNF…IYNDPSLVKS (128 aa)) folds into the NEAT 1 domain. The disordered stretch occupies residues 241-324 (NDQSSSVASN…NQSDVNQQYP (84 aa)). Positions 243 to 276 (QSSSVASNQTNTNTSNQNISTINNANNQPQATTN) are enriched in low complexity. Polar residues predominate over residues 277–323 (MSQPAQPKSSTNADQASSQPAHETNSNGNTNDKTNESSNQSDVNQQY). 2 consecutive NEAT domains span residues 345 to 471 (TADN…DYVD) and 543 to 660 (QLTD…TKDD). Disordered regions lie at residues 657-720 (TKDD…DNNI), 751-782 (QIAKDTDRNVDKDADNSVGMSSNVDTDKDSNK), and 841-868 (KTKEKAGTPSKENKLSQSKMLPKTGETT). Composition is skewed to polar residues over residues 663–677 (SQNNTSEPLNVQTGQ) and 687–697 (AENSSTATNPK). Composition is skewed to basic and acidic residues over residues 698–720 (DASDKADVIEPESDVVKDADNNI), 751–765 (QIAKDTDRNVDKDAD), and 841–854 (KTKEKAGTPSKENK). Positions 855 to 868 (LSQSKMLPKTGETT) are enriched in polar residues. Positions 861 to 865 (LPKTG) match the LPXTG sorting signal motif. At Thr864 the chain carries Pentaglycyl murein peptidoglycan amidated threonine. Residues 865 to 895 (GETTSSQSWWGLYALLGMLALFIPKFRKESK) constitute a propeptide, removed by sortase.

The protein belongs to the IsdH family.

The protein localises to the secreted. It localises to the cell wall. In terms of biological role, binds human plasma haptoglobin-hemoglobin complexes, haptoglobin and hemoglobin. Binds haptoglobin-hemoglobin complexes with significantly higher affinity than haptoglobin alone. This chain is Iron-regulated surface determinant protein H (isdH), found in Staphylococcus aureus (strain NCTC 8325 / PS 47).